We begin with the raw amino-acid sequence, 160 residues long: MAPK regulated corepressor interacting protein 2 (160 aa).

Met-1 bears the N-acetylmethionine mark. The disordered stretch occupies residues 1 to 22 (MYTITKGPSKLVAQRRTGPTQQ). Position 35 is an omega-N-methylarginine (Arg-35). The interval 43 to 64 (LPAHLQPSAQTQGPWPLASSGP) is disordered. A Phosphoserine modification is found at Ser-61. Arg-65 is subject to Omega-N-methylarginine. Ser-82 carries the post-translational modification Phosphoserine.

The protein belongs to the MCRIP family. In terms of assembly, interacts with DDX6. Interacts with MCRIP1.

It is found in the cytoplasm. The protein resides in the stress granule. It localises to the nucleus. This chain is MAPK regulated corepressor interacting protein 2 (Mcrip2), found in Mus musculus (Mouse).